The primary structure comprises 218 residues: Large ribosomal subunit protein uL3 (218 aa).

Residues 126 to 170 form a disordered region; the sequence is HGFSRGPMSHGSKNHREPGSTGAGTTPGRIYPGKRMAGRYGGKKR.

It belongs to the universal ribosomal protein uL3 family. In terms of assembly, part of the 50S ribosomal subunit. Forms a cluster with proteins L14 and L19.

In terms of biological role, one of the primary rRNA binding proteins, it binds directly near the 3'-end of the 23S rRNA, where it nucleates assembly of the 50S subunit. This chain is Large ribosomal subunit protein uL3, found in Prochlorococcus marinus (strain MIT 9313).